A 180-amino-acid chain; its full sequence is Large ribosomal subunit protein uL6 (180 aa).

Belongs to the universal ribosomal protein uL6 family. Part of the 50S ribosomal subunit.

Its function is as follows. This protein binds to the 23S rRNA, and is important in its secondary structure. It is located near the subunit interface in the base of the L7/L12 stalk, and near the tRNA binding site of the peptidyltransferase center. The protein is Large ribosomal subunit protein uL6 of Anaeromyxobacter dehalogenans (strain 2CP-C).